Reading from the N-terminus, the 1009-residue chain is Membrane alanyl aminopeptidase (1009 aa).

The N-terminal stretch at 1-15 (MAAIKLLVLSLACAC) is a signal peptide. Residues 16–52 (VIAHSPIPPASRTIFLDERLEGGAFENIDAFENIELS) constitute a propeptide, activation peptide. 338-342 (GAMEN) contacts substrate. H374 is a Zn(2+) binding site. The active-site Proton acceptor is E375. H378 and E397 together coordinate Zn(2+). N906 carries an N-linked (GlcNAc...) asparagine glycan. A disordered region spans residues 955-980 (PSTSTTSTTAAPTTVTQPTITEPSTP). Residue D987 is the site of GPI-anchor amidated aspartate attachment. Positions 988 to 1009 (SAMTSFASLFIISLGAILHLIL) are cleaved as a propeptide — removed in mature form.

This sequence belongs to the peptidase M1 family. Zn(2+) serves as cofactor.

The protein resides in the cell membrane. Its function is as follows. Binds to the B.thuringiensis toxin, CryIA(C). This chain is Membrane alanyl aminopeptidase, found in Heliothis virescens (Tobacco budworm moth).